Reading from the N-terminus, the 451-residue chain is Phosphoglucosamine mutase (451 aa).

The active-site Phosphoserine intermediate is the S107. Mg(2+)-binding residues include S107, D246, D248, and D250. At S107 the chain carries Phosphoserine.

Belongs to the phosphohexose mutase family. Mg(2+) is required as a cofactor. Post-translationally, activated by phosphorylation.

The catalysed reaction is alpha-D-glucosamine 1-phosphate = D-glucosamine 6-phosphate. In terms of biological role, catalyzes the conversion of glucosamine-6-phosphate to glucosamine-1-phosphate. The sequence is that of Phosphoglucosamine mutase from Burkholderia cenocepacia (strain HI2424).